The chain runs to 111 residues: Large ribosomal subunit protein eL33x (111 aa).

It belongs to the eukaryotic ribosomal protein eL33 family.

This Arabidopsis thaliana (Mouse-ear cress) protein is Large ribosomal subunit protein eL33x (RPL35AD).